The primary structure comprises 525 residues: Matrix extracellular phosphoglycoprotein (525 aa).

The first 17 residues, Met-1 to Ala-17, serve as a signal peptide directing secretion. Disordered stretches follow at residues Thr-24–Arg-95, Ala-187–Ile-216, and Glu-237–Asp-525. Basic and acidic residues-rich tracts occupy residues Glu-25–Gly-46 and Ile-64–Ser-73. Composition is skewed to polar residues over residues Ser-75–Arg-95 and Asp-200–Ser-210. The dentonin stretch occupies residues Thr-242–Asp-264. Residues Arg-247–Asp-249 carry the Cell attachment site motif. Ser-256 is a glycosylation site (O-linked (Xyl...) (chondroitin sulfate) serine). Composition is skewed to basic and acidic residues over residues Glu-292–Asn-312 and Thr-319–Asp-328. 2 N-linked (GlcNAc...) asparagine glycosylation sites follow: Asn-477 and Asn-478. The tract at residues Arg-507–Asp-525 is ASARM motif; interaction with PHEX. Residues Ser-513–Asp-525 show a composition bias toward low complexity.

It belongs to the PF07175/osteoregulin family. As to quaternary structure, interacts (via the ASARM motif) with PHEX; the interaction is zinc-dependent. Phosphorylated on serine residues in the ASARM motif (in vitro) by FAM20C; the phosphorylation is important for the inhibition of bone mineralization. In terms of processing, cleaved by CTSB/cathepsin B; the cleavage is blocked by metalloprotease PHEX. In terms of tissue distribution, detected in urine (at protein level). Expressed by osteoblasts. Expressed by stem cells in dental pulp. Expressed by mesenchymal cells in dental papilla and dental pulp. Expressed in teeth, specifically in decidious dentin. Expressed in ondotoblasts. Expressed in salivary glands. Secreted from oncogenic hypophosphatemic tumors.

The protein resides in the secreted. The protein localises to the extracellular space. Its subcellular location is the extracellular matrix. Its function is as follows. Promotes renal phosphate excretion and inhibits intestinal phosphate absorption. Promotes bone mineralization by osteoblasts and cartilage mineralization by chondrocytes. Regulates the mineralization of the extracellular matrix of the craniofacial complex, such as teeth, bone and cartilage. Promotes dental pulp stem cell proliferation and differentiation. The protein is Matrix extracellular phosphoglycoprotein (MEPE) of Homo sapiens (Human).